Reading from the N-terminus, the 396-residue chain is Tryptophan synthase beta chain (396 aa).

Lysine 86 bears the N6-(pyridoxal phosphate)lysine mark.

It belongs to the TrpB family. As to quaternary structure, tetramer of two alpha and two beta chains. Pyridoxal 5'-phosphate is required as a cofactor.

It carries out the reaction (1S,2R)-1-C-(indol-3-yl)glycerol 3-phosphate + L-serine = D-glyceraldehyde 3-phosphate + L-tryptophan + H2O. Its pathway is amino-acid biosynthesis; L-tryptophan biosynthesis; L-tryptophan from chorismate: step 5/5. In terms of biological role, the beta subunit is responsible for the synthesis of L-tryptophan from indole and L-serine. This is Tryptophan synthase beta chain from Yersinia enterocolitica serotype O:8 / biotype 1B (strain NCTC 13174 / 8081).